The primary structure comprises 293 residues: Homoserine O-acetyltransferase (293 aa).

Catalysis depends on C141, which acts as the Acyl-thioester intermediate. Substrate is bound by residues K162 and S190. Residue H234 is the Proton acceptor of the active site. Residue E236 is part of the active site. R248 provides a ligand contact to substrate.

This sequence belongs to the MetA family.

It localises to the cytoplasm. It catalyses the reaction L-homoserine + acetyl-CoA = O-acetyl-L-homoserine + CoA. The protein operates within amino-acid biosynthesis; L-methionine biosynthesis via de novo pathway; O-acetyl-L-homoserine from L-homoserine: step 1/1. Functionally, transfers an acetyl group from acetyl-CoA to L-homoserine, forming acetyl-L-homoserine. The protein is Homoserine O-acetyltransferase of Campylobacter jejuni subsp. jejuni serotype O:2 (strain ATCC 700819 / NCTC 11168).